We begin with the raw amino-acid sequence, 286 residues long: Pantothenate synthetase (286 aa).

ATP is bound at residue 31–38 (MGALHDGH). The active-site Proton donor is the H38. Q62 is a (R)-pantoate binding site. Q62 is a binding site for beta-alanine. 148–151 (GKKD) is a binding site for ATP. Position 154 (Q154) interacts with (R)-pantoate. Residues V177 and 185 to 188 (KSSR) contribute to the ATP site.

Belongs to the pantothenate synthetase family. Homodimer.

It is found in the cytoplasm. The enzyme catalyses (R)-pantoate + beta-alanine + ATP = (R)-pantothenate + AMP + diphosphate + H(+). It participates in cofactor biosynthesis; (R)-pantothenate biosynthesis; (R)-pantothenate from (R)-pantoate and beta-alanine: step 1/1. Catalyzes the condensation of pantoate with beta-alanine in an ATP-dependent reaction via a pantoyl-adenylate intermediate. The sequence is that of Pantothenate synthetase from Staphylococcus carnosus (strain TM300).